Reading from the N-terminus, the 488-residue chain is Glutamyl-tRNA(Gln) amidotransferase subunit A (488 aa).

Catalysis depends on charge relay system residues Lys77 and Ser152. Residue Ser176 is the Acyl-ester intermediate of the active site.

It belongs to the amidase family. GatA subfamily. As to quaternary structure, heterotrimer of A, B and C subunits.

It carries out the reaction L-glutamyl-tRNA(Gln) + L-glutamine + ATP + H2O = L-glutaminyl-tRNA(Gln) + L-glutamate + ADP + phosphate + H(+). Allows the formation of correctly charged Gln-tRNA(Gln) through the transamidation of misacylated Glu-tRNA(Gln) in organisms which lack glutaminyl-tRNA synthetase. The reaction takes place in the presence of glutamine and ATP through an activated gamma-phospho-Glu-tRNA(Gln). The chain is Glutamyl-tRNA(Gln) amidotransferase subunit A from Streptococcus sanguinis (strain SK36).